Reading from the N-terminus, the 637-residue chain is Phospholipase B (637 aa).

An N-terminal signal peptide occupies residues 1-19 (MSIATATFAFSLFATIAFA). Residues 46–572 (DCPSNVTWIR…DTWCWAGDDN (527 aa)) enclose the PLA2c domain. Residues N50, N56, N122, N231, N246, N272, N314, N343, N387, N433, N481, N501, N528, N553, N572, N594, and N606 are each glycosylated (N-linked (GlcNAc...) asparagine).

Belongs to the lysophospholipase family. N-glycosylated.

It is found in the secreted. Its subcellular location is the cell membrane. It catalyses the reaction a 1-acyl-sn-glycero-3-phosphocholine + H2O = sn-glycerol 3-phosphocholine + a fatty acid + H(+). Inhibited by Fe(3+) ion. Exhibits phospholipase B (PLB), lysophospholipase (LPL) and lysophospholipase/transacylase (LPTA) activities. This Cryptococcus neoformans var. grubii serotype A (strain H99 / ATCC 208821 / CBS 10515 / FGSC 9487) (Filobasidiella neoformans var. grubii) protein is Phospholipase B (PLB1).